The sequence spans 255 residues: Triosephosphate isomerase (255 aa).

Position 9 to 11 (9 to 11 (NWK)) interacts with substrate. Histidine 95 functions as the Electrophile in the catalytic mechanism. The active-site Proton acceptor is glutamate 167. Substrate contacts are provided by residues glycine 173, serine 212, and 233–234 (GG).

The protein belongs to the triosephosphate isomerase family. Homodimer.

Its subcellular location is the cytoplasm. It catalyses the reaction D-glyceraldehyde 3-phosphate = dihydroxyacetone phosphate. It functions in the pathway carbohydrate biosynthesis; gluconeogenesis. It participates in carbohydrate degradation; glycolysis; D-glyceraldehyde 3-phosphate from glycerone phosphate: step 1/1. Functionally, involved in the gluconeogenesis. Catalyzes stereospecifically the conversion of dihydroxyacetone phosphate (DHAP) to D-glyceraldehyde-3-phosphate (G3P). The polypeptide is Triosephosphate isomerase (Sodalis glossinidius (strain morsitans)).